The following is a 328-amino-acid chain: 6-phosphogluconolactonase (328 aa).

It belongs to the cycloisomerase 2 family.

It catalyses the reaction 6-phospho-D-glucono-1,5-lactone + H2O = 6-phospho-D-gluconate + H(+). It functions in the pathway carbohydrate degradation; pentose phosphate pathway; D-ribulose 5-phosphate from D-glucose 6-phosphate (oxidative stage): step 2/3. Functionally, catalyzes the hydrolysis of 6-phosphogluconolactone to 6-phosphogluconate. This chain is 6-phosphogluconolactonase, found in Xenorhabdus nematophila (strain ATCC 19061 / DSM 3370 / CCUG 14189 / LMG 1036 / NCIMB 9965 / AN6).